A 586-amino-acid polypeptide reads, in one-letter code: DNA-directed RNA polymerase subunit beta' (586 aa).

Zn(2+) is bound by residues C64, C66, C85, and C88. Mg(2+) contacts are provided by D448, D450, and D452.

This sequence belongs to the RNA polymerase beta' chain family. RpoC1 subfamily. As to quaternary structure, in plastids the minimal PEP RNA polymerase catalytic core is composed of four subunits: alpha, beta, beta', and beta''. When a (nuclear-encoded) sigma factor is associated with the core the holoenzyme is formed, which can initiate transcription. Mg(2+) serves as cofactor. It depends on Zn(2+) as a cofactor.

Its subcellular location is the plastid. It localises to the chloroplast. It catalyses the reaction RNA(n) + a ribonucleoside 5'-triphosphate = RNA(n+1) + diphosphate. Its function is as follows. DNA-dependent RNA polymerase catalyzes the transcription of DNA into RNA using the four ribonucleoside triphosphates as substrates. The polypeptide is DNA-directed RNA polymerase subunit beta' (Euglena gracilis).